Consider the following 1322-residue polypeptide: MIVLKGASALSPFRLARFESRLQTTVPELHIVGAWHCYLIQIKSGHTLDMSALHRILQAESVSEPPQEHVVSRYVMPRLGTHSPWSSKTTELLHGAGQPIARIERGTRIDLLGWSANAATCPAIAKQLYDPMTQSLLESEDEVKTLFNVPEPLSLERIALIDLEHANTRWGLALTADEIDYLRTRYTELNRVPSDVELMMFAQANSEHCRHKIFNATWTINDKEQQHSLFQMIKHTHQHTPQYTLSAYADNAAVIEGHPTARYRPDPITGEYRHEAVLPGAFQIKVETHNHPTAIAPFPGASTGAGGEIRDEGATGRGGKPKAGLSGFSVSHLRIPTLPHPWETPRALNPRMASALDIMLEGPLGSAAFNNEFGRPNLLGYFRSFELSASKTLTRAYDKPIMLAGGLGAIDRIHIKKLRLQPGDVIIVLGGPAMLIGLGGGAASSVTSGTSTEALDFASVQRDNPEMQRRCQEVIDHCVALGTNNPIRSFHDVGAGGLSNAIPELLHDSEVGGVIDLAKIPSDDPSLSPLELWCNESQERYVLGISAAHLQAFAAICTRERCPFAAVGVATATEQLIVGYGVTLPAALHVTEQQTPQRANHTETSPTPNTLPPSVREAFAIDLPMDVLFGKAPKMHRNTAHPPPPHWPTLDSTQLDLHHAGLRVLAHPTVAAKNFLVTIGDRSIGGLTAREQMIGPWQLPLADCAITLAGFGTYAGEAFAIGERAPLALLNSAAAARMAVGEAITNLCAAPVESLSMVKLSANWMAAAEHPGEDALLYDAVKAIGIELCPALDISIPVGKDSLSMQSRWQADGATHTCISPVSLVISAFTPVADARRQLTPLLHHQTNSELWLIALDGGKQRLGGSVLAQVHADSAALPTFGGECPDLDTPETLRAFFALMNDARNAGLLLAYHDRSDGGAFAALCEMAFASHLGLDITCDNRTEHLFPHLFNEELGAIVQVADEHRTAFTDLVEQHGLTAYTQRIAHPTTAPSIRIMHNDQCLAQWTWETLFDAWWSVTHAMQRLRDNPECADEEREIARTFTAPGLKPTLSFDPAVDVAMPFIATGIRPTVAILREQGINGHIEMALCFERAGFHCVDIHMNDLITGRVHLDEFVGLAACGGFSYGDVLGAGRGWATSILERTALRDQFAAFFTRTDRFALGVCNGCQMLSQLKSMIPGAEHWPRFVRNRSEQFEARTALLEVIQSPSIFLSGMAGSRLPVAVAHGEGYAMFDTPADQAAAHVALRYINGHGQAATHYPLNPNGSPNGITGLTTTDGRITILMPHPERTPRTINLSWSPNEWGEDTPWLRLFRNARAWVG.

300–311 provides a ligand contact to ATP; it reads GASTGAGGEIRD. The segment covering 593–608 has biased composition (polar residues); the sequence is QQTPQRANHTETSPTP. The disordered stretch occupies residues 593–613; that stretch reads QQTPQRANHTETSPTPNTLPP. Ala-702 lines the ATP pocket. 4 residues coordinate Mg(2+): Asp-703, Glu-742, Asn-746, and Asp-915. Ser-917 is a binding site for ATP. One can recognise a Glutamine amidotransferase type-1 domain in the interval 1073 to 1322; that stretch reads VAILREQGIN…LFRNARAWVG (250 aa). Catalysis depends on Cys-1166, which acts as the Nucleophile. Residues His-1287 and Glu-1289 contribute to the active site.

This sequence in the N-terminal section; belongs to the FGAMS family. As to quaternary structure, monomer.

It is found in the cytoplasm. The enzyme catalyses N(2)-formyl-N(1)-(5-phospho-beta-D-ribosyl)glycinamide + L-glutamine + ATP + H2O = 2-formamido-N(1)-(5-O-phospho-beta-D-ribosyl)acetamidine + L-glutamate + ADP + phosphate + H(+). It participates in purine metabolism; IMP biosynthesis via de novo pathway; 5-amino-1-(5-phospho-D-ribosyl)imidazole from N(2)-formyl-N(1)-(5-phospho-D-ribosyl)glycinamide: step 1/2. Functionally, phosphoribosylformylglycinamidine synthase involved in the purines biosynthetic pathway. Catalyzes the ATP-dependent conversion of formylglycinamide ribonucleotide (FGAR) and glutamine to yield formylglycinamidine ribonucleotide (FGAM) and glutamate. The chain is Phosphoribosylformylglycinamidine synthase from Xylella fastidiosa (strain 9a5c).